Consider the following 70-residue polypeptide: uncharacterized protein (70 aa).

This is an uncharacterized protein from Swinepox virus (strain Kasza) (SWPV).